A 408-amino-acid polypeptide reads, in one-letter code: Histidine--tRNA ligase (408 aa).

Belongs to the class-II aminoacyl-tRNA synthetase family. In terms of assembly, homodimer.

The protein resides in the cytoplasm. The enzyme catalyses tRNA(His) + L-histidine + ATP = L-histidyl-tRNA(His) + AMP + diphosphate + H(+). In Campylobacter jejuni subsp. jejuni serotype O:6 (strain 81116 / NCTC 11828), this protein is Histidine--tRNA ligase.